A 163-amino-acid chain; its full sequence is Nucleotide-binding protein MT0592 (163 aa).

It belongs to the YajQ family.

Nucleotide-binding protein. The polypeptide is Nucleotide-binding protein MT0592 (Mycobacterium tuberculosis (strain CDC 1551 / Oshkosh)).